Reading from the N-terminus, the 151-residue chain is Small ribosomal subunit protein uS15 (151 aa).

It belongs to the universal ribosomal protein uS15 family. Component of the small ribosomal subunit.

It is found in the cytoplasm. In terms of biological role, component of the small ribosomal subunit. The ribosome is a large ribonucleoprotein complex responsible for the synthesis of proteins in the cell. The polypeptide is Small ribosomal subunit protein uS15 (rps13) (Gillichthys mirabilis (Long-jawed mudsucker)).